A 114-amino-acid polypeptide reads, in one-letter code: SCP2 domain-containing protein YusD (114 aa).

Positions 21-101 (NASTLLITFQ…RALLKLEAIL (81 aa)) constitute an SCP2 domain.

This Bacillus subtilis (strain 168) protein is SCP2 domain-containing protein YusD (yusD).